Reading from the N-terminus, the 370-residue chain is Prolactin-releasing peptide receptor (370 aa).

Residues 1 to 62 (MASLPTQGPA…LQLVHQLKGL (62 aa)) are Extracellular-facing. N-linked (GlcNAc...) asparagine glycans are attached at residues N27 and N36. The chain crosses the membrane as a helical span at residues 63 to 83 (IVLLYSIVVVVGLVGNCLLVL). Residues 84–101 (VIARVRRLHNVTNFLIGN) are Cytoplasmic-facing. Residues 102-122 (LALSDVLMCTACVPLTLAYAF) traverse the membrane as a helical segment. The Extracellular segment spans residues 123 to 126 (EPRG). Residues 127–147 (WVFGGGLCHLVFFLQPVTVYV) traverse the membrane as a helical segment. A disulfide bridge links C134 with C211. Residues 148-175 (SVFTLTTIAVDRYVVLVHPLRRRISLRF) are Cytoplasmic-facing. A helical transmembrane segment spans residues 176-196 (SAYAVLAIWALSAVLALPAAL). At 197 to 225 (HTYHVELKPHRVRLCEEFWGSQERQRQLY) the chain is on the extracellular side. A helical transmembrane segment spans residues 226–246 (AWGLLLVTYLLPLLVILLSYV). Topologically, residues 247–276 (RVSVNLRNRVVPGCVTQSQADWDRARRRRT) are cytoplasmic. A helical transmembrane segment spans residues 277-297 (FCLLVVVVVVFAVCWLPLHVF). The Extracellular segment spans residues 298-317 (NLLRDLDPHAIDPYAFGLVQ). Residues 318–338 (LLCHWLAMSSACYNPFIYAWL) form a helical membrane-spanning segment. Residues 339–369 (HDSFREELRKLLLAWPRKIAPHGQSMTVSVV) lie on the Cytoplasmic side of the membrane. A required for interaction with GRIP1, GRIP2 and PICK1 region spans residues 365–370 (TVSVVI).

The protein belongs to the G-protein coupled receptor 1 family. In terms of assembly, interacts through its C-terminal region with the PDZ domain-containing proteins GRIP1, GRIP2 and PICK1. Interacts with PDZ domains 4 and 5 of GRIP1 and with the PDZ domain of PICK1.

Its subcellular location is the cell membrane. Functionally, receptor for prolactin-releasing peptide (PrRP). Implicated in lactation, regulation of food intake and pain-signal processing. The polypeptide is Prolactin-releasing peptide receptor (PRLHR) (Bos taurus (Bovine)).